An 875-amino-acid polypeptide reads, in one-letter code: Phosphatidylinositol 3-kinase VPS34 (875 aa).

In terms of domain architecture, C2 PI3K-type spans 14–188 (LDVPLKVKIK…WLDEITISKL (175 aa)). Positions 293–526 (LDKQVKPDIK…SSFWSRLDKK (234 aa)) constitute a PIK helical domain. Residues 593–859 (CPETSKVFKS…LINDSVNALL (267 aa)) form the PI3K/PI4K catalytic domain. A G-loop region spans residues 599–605 (VFKSSLS). The catalytic loop stretch occupies residues 728–736 (GVGDRHLDN). The activation loop stretch occupies residues 747-768 (HADFGYILGQDPKPFPPLMKLP).

It belongs to the PI3/PI4-kinase family. In terms of assembly, component of the autophagy-specific VPS34 PI3-kinase complex I composed of VPS15, VPS30, VPS34, ATG14 and ATG38, and of the VPS34 PI3-kinase complex II composed of VPS15, VPS30, VPS34 and VPS38. Interacts directly with ATG38. Interacts directly with VPS34. In terms of processing, autophosphorylated. Might also be phosphorylated by VPS15.

The protein localises to the golgi apparatus. It is found in the trans-Golgi network membrane. It localises to the endosome membrane. The catalysed reaction is a 1,2-diacyl-sn-glycero-3-phospho-(1D-myo-inositol) + ATP = a 1,2-diacyl-sn-glycero-3-phospho-(1D-myo-inositol-3-phosphate) + ADP + H(+). Its activity is regulated as follows. Phosphatidylinositol 3-kinase activity is directly dependent on VPS15 protein kinase activity. In terms of biological role, phosphatidylinositol 3-kinase required for cytoplasm to vacuole transport (Cvt) and autophagy as a part of the autophagy-specific VPS34 PI3-kinase complex I. This complex is essential to recruit the ATG8-phosphatidylinositol conjugate and the ATG12-ATG5 conjugate to the pre-autophagosomal structure. Also involved in endosome-to-Golgi retrograde transport as part of the VPS34 PI3-kinase complex II. This second complex is required for the endosome-to-Golgi retrieval of PEP1 and KEX2, and the recruitment of VPS5 and VPS7, two components of the retromer complex, to endosomal membranes (probably through the synthesis of a specific pool of phosphatidylinositol 3-phosphate recruiting the retromer to the endosomes). Its activation by VPS15 may lead to the phosphorylation of phosphatidylinositol in the sorting compartment membrane. Finally, it might also be involved in ethanol tolerance and cell wall integrity. The protein is Phosphatidylinositol 3-kinase VPS34 (VPS34) of Saccharomyces cerevisiae (strain ATCC 204508 / S288c) (Baker's yeast).